The sequence spans 526 residues: Cytochrome P450 monooxygenase 58 (526 aa).

Transmembrane regions (helical) follow at residues 13-33 (IASS…LLLI), 115-135 (FIMA…GYGK), and 306-326 (IGAG…AMTL). Residue cysteine 451 participates in heme binding.

Belongs to the cytochrome P450 family. Heme is required as a cofactor.

The protein localises to the membrane. Its pathway is secondary metabolite biosynthesis. Functionally, cytochrome P450 monooxygenase that is able to use delta(6)-protoilludene as a substrate to produce delta(6)-protoilludene-8-ol. The sequence is that of Cytochrome P450 monooxygenase 58 from Postia placenta (strain ATCC 44394 / Madison 698-R) (Brown rot fungus).